Here is a 747-residue protein sequence, read N- to C-terminus: Protein Niban 2 (747 aa).

The N-myristoyl glycine moiety is linked to residue glycine 2. A PH domain is found at 68-192; sequence RIIFSGNLFQ…WQAVLQDCVR (125 aa). Serine 568 and serine 574 each carry phosphoserine. A disordered region spans residues 589–747; that stretch reads WGEQYGDGGD…EDSAGVQTEF (159 aa). Gly residues predominate over residues 593 to 602; it reads YGDGGDGSDS. Phosphoserine is present on residues serine 605, serine 626, serine 641, serine 645, serine 648, serine 667, serine 672, serine 683, serine 693, and serine 697. A compositionally biased stretch (basic and acidic residues) spans 708–722; sequence VDLEPPKPSDQETGE. Residues 734–747 show a composition bias toward polar residues; the sequence is HTTTEDSAGVQTEF.

The protein belongs to the Niban family. Post-translationally, as apoptosis proceeds, degraded via an proteasome-independent pathway, probably by caspases.

It localises to the cytoplasm. It is found in the cytosol. The protein resides in the cell junction. The protein localises to the adherens junction. Its subcellular location is the membrane. Its function is as follows. May play a role in apoptosis suppression. This chain is Protein Niban 2, found in Rattus norvegicus (Rat).